We begin with the raw amino-acid sequence, 129 residues long: Small ribosomal subunit protein uS12 (129 aa).

Position 89 is a 3-methylthioaspartic acid (Asp-89). The tract at residues 110-129 (RKQGRSRYGAPRKQVVATKK) is disordered.

Belongs to the universal ribosomal protein uS12 family. As to quaternary structure, part of the 30S ribosomal subunit. Contacts proteins S8 and S17. May interact with IF1 in the 30S initiation complex.

Functionally, with S4 and S5 plays an important role in translational accuracy. In terms of biological role, interacts with and stabilizes bases of the 16S rRNA that are involved in tRNA selection in the A site and with the mRNA backbone. Located at the interface of the 30S and 50S subunits, it traverses the body of the 30S subunit contacting proteins on the other side and probably holding the rRNA structure together. The combined cluster of proteins S8, S12 and S17 appears to hold together the shoulder and platform of the 30S subunit. The protein is Small ribosomal subunit protein uS12 of Rickettsia bellii (strain RML369-C).